Reading from the N-terminus, the 117-residue chain is Large ribosomal subunit protein uL18 (117 aa).

The protein belongs to the universal ribosomal protein uL18 family. Part of the 50S ribosomal subunit; part of the 5S rRNA/L5/L18/L25 subcomplex. Contacts the 5S and 23S rRNAs.

Its function is as follows. This is one of the proteins that bind and probably mediate the attachment of the 5S RNA into the large ribosomal subunit, where it forms part of the central protuberance. This chain is Large ribosomal subunit protein uL18, found in Methylococcus capsulatus (strain ATCC 33009 / NCIMB 11132 / Bath).